Consider the following 462-residue polypeptide: Glycine--tRNA ligase (462 aa).

2 residues coordinate substrate: R100 and E174. ATP is bound by residues 206–208 (RNE), 216–221 (FRTREF), 290–291 (EL), and 334–337 (GVDR). 221–225 (FEQME) lines the substrate pocket. 330 to 334 (EPSVG) serves as a coordination point for substrate.

It belongs to the class-II aminoacyl-tRNA synthetase family. In terms of assembly, homodimer.

Its subcellular location is the cytoplasm. The enzyme catalyses tRNA(Gly) + glycine + ATP = glycyl-tRNA(Gly) + AMP + diphosphate. Functionally, catalyzes the attachment of glycine to tRNA(Gly). This is Glycine--tRNA ligase from Alkaliphilus oremlandii (strain OhILAs) (Clostridium oremlandii (strain OhILAs)).